Reading from the N-terminus, the 117-residue chain is MARAQLVLVALVAALLLAGPHTTMAAISCGQVNSAVSPCLSYARGGSGPSAACCSGVRSLNSAATTTADRRTACNCLKNVAGSISGLNAGNAASIPSKCGVSIPYTISPSIDCSSVN.

The signal sequence occupies residues 1-25 (MARAQLVLVALVAALLLAGPHTTMA). Disulfide bonds link C29–C76, C39–C53, C54–C99, and C74–C113.

Belongs to the plant LTP family. Expressed in roots, mesocotyls and developing leaves.

In terms of biological role, plant non-specific lipid-transfer proteins transfer phospholipids as well as galactolipids across membranes. May play a role in wax or cutin deposition in the cell walls of expanding epidermal cells and certain secretory tissues. This is Non-specific lipid-transfer protein 2B (LTP2-B) from Oryza sativa subsp. japonica (Rice).